The chain runs to 79 residues: Sec-independent protein translocase protein TatA (79 aa).

The chain crosses the membrane as a helical span at residues 1–21 (MGGFTSIWHWVIVLLVIVLLF). Residues 48–79 (EEEAKNEPKTLDAQATQTKAHESSEIKSKQES) are disordered. Over residues 66–79 (KAHESSEIKSKQES) the composition is skewed to basic and acidic residues.

Belongs to the TatA/E family. The Tat system comprises two distinct complexes: a TatABC complex, containing multiple copies of TatA, TatB and TatC subunits, and a separate TatA complex, containing only TatA subunits. Substrates initially bind to the TatABC complex, which probably triggers association of the separate TatA complex to form the active translocon.

It is found in the cell inner membrane. Its function is as follows. Part of the twin-arginine translocation (Tat) system that transports large folded proteins containing a characteristic twin-arginine motif in their signal peptide across membranes. TatA could form the protein-conducting channel of the Tat system. In Helicobacter pylori (strain P12), this protein is Sec-independent protein translocase protein TatA.